Reading from the N-terminus, the 635-residue chain is DNA mismatch repair protein MutL (635 aa).

A disordered region spans residues 352–380; sequence KAALQRGWVPPGAGRPGEGGGRAAPPPWR.

The protein belongs to the DNA mismatch repair MutL/HexB family.

This protein is involved in the repair of mismatches in DNA. It is required for dam-dependent methyl-directed DNA mismatch repair. May act as a 'molecular matchmaker', a protein that promotes the formation of a stable complex between two or more DNA-binding proteins in an ATP-dependent manner without itself being part of a final effector complex. The polypeptide is DNA mismatch repair protein MutL (Symbiobacterium thermophilum (strain DSM 24528 / JCM 14929 / IAM 14863 / T)).